Consider the following 264-residue polypeptide: MNAIKNNISLQAQNLSYSIGNQKIIDNVSLSVNKGEIVAIIGPNGAGKSTLLRLLTGYIKPEHGQCDLHGTPIEQWPAEQLARTRAVMRQHSSLSFPFSVEEVVAMGRSPHGIHHKQTAIDTVIEQTDCQALRHRDYRQLSGGEQQRVQLARVLAQLWHPTPIECCLFLDEPTSALDLYHQQHTLRLLYRLTREQPMAMCCVLHDLNLAALYADKIFLLHKGKLVAAGTPEEVLNDHTLRKWYQADLGITRHPETQQPQIYLRQ.

The 237-residue stretch at 10–246 (LQAQNLSYSI…HTLRKWYQAD (237 aa)) folds into the ABC transporter domain. 42–49 (GPNGAGKS) contacts ATP.

This sequence belongs to the ABC transporter superfamily. Heme (hemin) importer (TC 3.A.1.14.5) family. The complex is composed of two ATP-binding proteins (HmuV), two transmembrane proteins (HmuU) and a solute-binding protein (HmuT).

It localises to the cell inner membrane. Part of the ABC transporter complex HmuTUV involved in hemin import. Responsible for energy coupling to the transport system. The sequence is that of Hemin import ATP-binding protein HmuV from Photorhabdus laumondii subsp. laumondii (strain DSM 15139 / CIP 105565 / TT01) (Photorhabdus luminescens subsp. laumondii).